The sequence spans 232 residues: Clarin-2 (232 aa).

The helical transmembrane segment at 10–30 threads the bilayer; it reads YGLASLLSFSSFILIIVALVV. N48 carries an N-linked (GlcNAc...) asparagine glycan. Helical transmembrane passes span 101–121, 139–159, and 188–208; these read ILLLLFLALALALVSMGFAIL, LWNVLAGGVVALAIASFVAAV, and SFWICVASASAHAANLVVVAI.

Belongs to the clarin family.

The protein resides in the cell projection. Its subcellular location is the stereocilium membrane. Plays a key role to hearing function. Required for normal organization and maintenance of the stereocilia bundle and for mechano-electrical transduction. The polypeptide is Clarin-2 (Homo sapiens (Human)).